A 115-amino-acid polypeptide reads, in one-letter code: Nitrogen regulatory protein P-II 1 (115 aa).

The residue at position 54 (Y54) is an O-UMP-tyrosine.

The protein belongs to the P(II) protein family.

Its function is as follows. Could be involved in the regulation of nitrogen fixation. The sequence is that of Nitrogen regulatory protein P-II 1 from Methanothermobacter thermautotrophicus (strain ATCC 29096 / DSM 1053 / JCM 10044 / NBRC 100330 / Delta H) (Methanobacterium thermoautotrophicum).